A 335-amino-acid chain; its full sequence is MLRLSLLRSTATLPVKCQRRGLILPAAAMYTLGSLIFGKEARLADAMERGELHNKNVDYAKEAEERTELRIRALANTRPMEPRYNGHVPLHRYEKLLLFAISGWNSFFHPEDGYNIVQLGEATALPVFLENLKQTMLSDSSGRRILKEQPNITTEILHMDKLAKLPHNTFGYVYYQWLKRENVSPDTRAPVKFIDDPMHAYIFKRYRQCHDFYHAITNMPIIIEGEITIKALEGANLGVPMAILGGILAPLRLKKVQRKRLYNIYLPWAVRTGLSCKPLINVYWEEMLEKDVTALRKELKITLPPDLRTMRKERAALRKEIDAKYNSQKRATTPA.

A mitochondrion-targeting transit peptide spans 1–10 (MLRLSLLRST). Residues histidine 210, aspartate 211, histidine 214, and glutamate 226 each contribute to the Zn(2+) site.

This sequence belongs to the COQ4 family. As to quaternary structure, component of a multi-subunit COQ enzyme complex, composed of at least COQ3, COQ4, COQ5, COQ6, COQ7 and COQ9. Interacts with COQ3. Zn(2+) serves as cofactor.

It localises to the mitochondrion inner membrane. It catalyses the reaction 4-hydroxy-3-methoxy-5-(all-trans-hexaprenyl)benzoate + H(+) = 2-methoxy-6-(all-trans-hexaprenyl)phenol + CO2. It participates in cofactor biosynthesis; ubiquinone biosynthesis. Functionally, lyase that catalyzes the C1-decarboxylation of 4-hydroxy-3-methoxy-5-(all-trans-hexaprenyl)benzoic acid into 2-methoxy-6-(all-trans-hexaprenyl)phenol during ubiquinone biosynthesis. May play a role in organizing a multi-subunit COQ enzyme complex required for coenzyme Q biosynthesis. Required for steady-state levels of COQ3, COQ4, COQ6, COQ7 and COQ9 polypeptides. The chain is Ubiquinone biosynthesis protein COQ4, mitochondrial from Saccharomyces cerevisiae (strain ATCC 204508 / S288c) (Baker's yeast).